We begin with the raw amino-acid sequence, 379 residues long: Cobalt-precorrin-5B C(1)-methyltransferase (379 aa).

The protein belongs to the CbiD family.

It carries out the reaction Co-precorrin-5B + S-adenosyl-L-methionine = Co-precorrin-6A + S-adenosyl-L-homocysteine. Its pathway is cofactor biosynthesis; adenosylcobalamin biosynthesis; cob(II)yrinate a,c-diamide from sirohydrochlorin (anaerobic route): step 6/10. Functionally, catalyzes the methylation of C-1 in cobalt-precorrin-5B to form cobalt-precorrin-6A. The protein is Cobalt-precorrin-5B C(1)-methyltransferase of Salmonella typhi.